Here is a 576-residue protein sequence, read N- to C-terminus: Vacuolar protein sorting-associated protein vps5 (576 aa).

Disordered regions lie at residues 1–60 and 156–198; these read MLGH…PRKR and DAAS…APQS. A Phosphothreonine modification is found at Thr55. Residues 156 to 169 show a composition bias toward polar residues; it reads DAASSSAPNFTHTV. Residues 170-181 are compositionally biased toward low complexity; the sequence is SSASSQKQGSTS. One can recognise a PX domain in the interval 200–317; that stretch reads TPFYIQVHDP…KLFLEAETFD (118 aa). The a 1,2-diacyl-sn-glycero-3-phospho-(1D-myo-inositol-3-phosphate) site is built by Arg244, Lys270, and Arg284. At Ser332 the chain carries Phosphoserine.

It belongs to the sorting nexin family. As to quaternary structure, component of the retromer complex which consists of vps29, vps26, vps35, vps5 and vps17.

Its subcellular location is the cytoplasm. The protein localises to the golgi apparatus. The protein resides in the membrane. Its function is as follows. Required for efficient sporulation target of PtdIns(3)P in vesicle transport required for onset of the forespore membrane formation. In terms of biological role, plays a role in vesicular protein sorting. Required for the endosome-to-Golgi retrieval of the vacuolar protein sorting receptor pep1/vps10. Component of the membrane-associated retromer complex which is essential in endosome-to-Golgi retrograde transport. The vps29-vps26-vps35 subcomplex may be involved in cargo selection. This chain is Vacuolar protein sorting-associated protein vps5 (vps5), found in Schizosaccharomyces pombe (strain 972 / ATCC 24843) (Fission yeast).